The primary structure comprises 548 residues: Zinc metalloproteinase dpy-31 (548 aa).

An N-terminal signal peptide occupies residues 1-24 (MSLLRSASLLLVVVTAALPPCTLG). The propeptide occupies 25-150 (YSLHDGSRLD…KTGQRRVKRK (126 aa)). The Peptidase M12A domain maps to 150-349 (KFIGSDLRRW…IRLMNKIYCS (200 aa)). A glycan (N-linked (GlcNAc...) asparagine) is linked at asparagine 190. 5 disulfide bridges follow: cysteine 193/cysteine 348, cysteine 216/cysteine 237, cysteine 352/cysteine 372, cysteine 374/cysteine 383, and cysteine 394/cysteine 422. Histidine 245 is a binding site for Zn(2+). Residue glutamate 246 is part of the active site. Zn(2+) is bound by residues histidine 249 and histidine 255. The EGF-like domain occupies 344–384 (NKIYCSNVCSRKLPCQRGGYTDPRRCDRCRCPDGFTGQFCE). One can recognise a CUB domain in the interval 394–510 (CGGRIQVNSG…RGFEARARAL (117 aa)). Residue asparagine 461 is glycosylated (N-linked (GlcNAc...) asparagine). A TSP type-1 domain is found at 513–547 (NGQWASWTPWTPCTASCGACGSRMRTRVCPHGACP). Cystine bridges form between cysteine 525–cysteine 546, cysteine 529–cysteine 546, and cysteine 541–cysteine 546.

Zn(2+) serves as cofactor.

The protein localises to the secreted. Metalloprotease which cleaves the carboxyl terminus of procollagens to mature collagens. Probably involved in cuticular collagen maturation. The sequence is that of Zinc metalloproteinase dpy-31 from Haemonchus contortus (Barber pole worm).